A 226-amino-acid chain; its full sequence is Thioredoxin domain-containing protein 9 (226 aa).

The 107-residue stretch at 74–180 folds into the Thioredoxin domain; sequence REIPSERDFF…TTETLEWRLG (107 aa). Phosphoserine is present on residues Ser188, Ser221, and Ser223.

In terms of assembly, forms ternary complexes with the chaperonin TCP1 complex, spanning the cylindrical chaperonin cavity and contacting at least 2 subunits.

It is found in the cytoplasm. The protein resides in the nucleus. Its subcellular location is the cytoskeleton. It localises to the microtubule organizing center. The protein localises to the centrosome. It is found in the midbody. Its function is as follows. Significantly diminishes the chaperonin TCP1 complex ATPase activity, thus negatively impacts protein folding, including that of actin or tubulin. This chain is Thioredoxin domain-containing protein 9 (TXNDC9), found in Homo sapiens (Human).